Here is a 139-residue protein sequence, read N- to C-terminus: Putative translationally-controlled tumor protein-like protein TPT1P8 (139 aa).

Positions M1–T139 constitute a TCTP domain. Residues T40–N51 show a composition bias toward polar residues. Residues T40 to E60 form a disordered region.

The protein belongs to the TCTP family.

The protein is Putative translationally-controlled tumor protein-like protein TPT1P8 (TPT1P8) of Homo sapiens (Human).